Here is a 166-residue protein sequence, read N- to C-terminus: Signal peptidase complex catalytic subunit SEC11 (166 aa).

Topologically, residues 1–9 (MNLRQQLTQ) are cytoplasmic. The chain crosses the membrane as a helical; Signal-anchor for type II membrane protein span at residues 10-31 (LLSIAYVFTSAFVAWKALSIVA). Topologically, residues 32–166 (NSHSPIVVVL…MGLSALLSGE (135 aa)) are lumenal. Active-site charge relay system residues include Ser44, His83, and Asp108. The interval 152–163 (ALLGFMGLSALL) is C-terminal short (CTS) helix.

The protein belongs to the peptidase S26B family. In terms of assembly, component of the signal peptidase complex (SPC) composed of a catalytic subunit SEC11 and three accessory subunits SPC1, SPC2 and SPC3. The complex induces a local thinning of the ER membrane which is used to measure the length of the signal peptide (SP) h-region of protein substrates. This ensures the selectivity of the complex towards h-regions shorter than 18-20 amino acids. SPC associates with the translocon complex.

It localises to the endoplasmic reticulum membrane. The enzyme catalyses Cleavage of hydrophobic, N-terminal signal or leader sequences from secreted and periplasmic proteins.. Its function is as follows. Catalytic component of the signal peptidase complex (SPC) which catalyzes the cleavage of N-terminal signal sequences from nascent proteins as they are translocated into the lumen of the endoplasmic reticulum. Specifically cleaves N-terminal signal peptides that contain a hydrophobic alpha-helix (h-region) shorter than 18-20 amino acids. This Clavispora lusitaniae (strain ATCC 42720) (Yeast) protein is Signal peptidase complex catalytic subunit SEC11 (SEC11).